The chain runs to 1216 residues: DNA polymerase subunit gamma-1 (1216 aa).

The segment covering 27–37 has biased composition (low complexity); that stretch reads SSSVLDPVPSD. The tract at residues 27–50 is disordered; that stretch reads SSSVLDPVPSDGQPQSQMPSSENG. Polar residues predominate over residues 38–50; sequence GQPQSQMPSSENG. The Exo I motif lies at 179–183; that stretch reads VFDVE. The active-site Exonuclease activity is Asp-181. The short motif at 250–258 is the Exo II element; sequence VGHNVSFDR. Ser-289 contributes to the DNA binding site. Positions 301–314 are enriched in basic residues; sequence GKHKTQHPTKRGQK. The interval 301 to 321 is disordered; that stretch reads GKHKTQHPTKRGQKSQKNANG. Residues 377 to 385 carry the Exo III motif; that stretch reads YCARDVWAT. A disordered region spans residues 488 to 518; the sequence is TASASKLPIEGAGPFGDPMDQEDPGPPSEEE. An accessory-interacting determinant region spans residues 491–552; that stretch reads ASKLPIEGAG…RPQHLPGHPG (62 aa). Residues 506-518 show a composition bias toward acidic residues; sequence MDQEDPGPPSEEE. Arg-560 contacts RNA. Residue Ser-574 coordinates DNA. RNA contacts are provided by His-731, Gly-740, and Lys-745. DNA-binding residues include Lys-783 and Thr-826. A trigger loop region spans residues 835-841; sequence TWLTASN. Positions 840 and 846 each coordinate RNA. The short motif at 864-873 is the Pol A element; sequence VGADVDSQEL. Positions 867, 868, 870, 872, 920, 924, and 928 each coordinate a 2'-deoxyribonucleoside 5'-triphosphate. Residues Asp-867 and Val-868 each coordinate Mg(2+). The Pol B motif lies at 920–935; the sequence is REHAKVFNYGRIYGAG. DNA contacts are provided by Thr-1071 and Ser-1072. The short motif at 1111 to 1118 is the Pol C element; the sequence is HDEVRYLV. A 2'-deoxyribonucleoside 5'-triphosphate is bound at residue Asp-1112. Asp-1112 is a Mg(2+) binding site.

This sequence belongs to the DNA polymerase type-A family. In terms of assembly, heterotrimer composed of a catalytic subunit and a homodimer of accessory subunits (POLG:POLG2). Interacts with TTC3. Interacts with LIG3. Mg(2+) is required as a cofactor.

It localises to the mitochondrion. Its subcellular location is the mitochondrion matrix. The protein resides in the mitochondrion nucleoid. The catalysed reaction is DNA(n) + a 2'-deoxyribonucleoside 5'-triphosphate = DNA(n+1) + diphosphate. It carries out the reaction a 3'-end 2'-deoxyribonucleotidyl-deoxyribonucleotide-DNA + H2O = a 3'-end 2'-deoxyribonucleotide-DNA + a 2'-deoxyribonucleoside 5'-phosphate + H(+). The enzyme catalyses a 5'-end 2'-deoxyribose-2'-deoxyribonucleotide-DNA = (2E,4S)-4-hydroxypenten-2-al-5-phosphate + a 5'-end 5'-phospho-2'-deoxyribonucleoside-DNA + H(+). With respect to regulation, inhibited by dideoxynucleotides such as antiviral agent zalcitabine. Its function is as follows. Catalytic subunit of DNA polymerase gamma solely responsible for replication of mitochondrial DNA (mtDNA). Replicates both heavy and light strands of the circular mtDNA genome using a single-stranded DNA template, RNA primers and the four deoxyribonucleoside triphosphates as substrates. Has 5' -&gt; 3' polymerase activity. Functionally interacts with TWNK and SSBP1 at the replication fork to form a highly processive replisome, where TWNK unwinds the double-stranded DNA template prior to replication and SSBP1 covers the parental heavy strand to enable continuous replication of the entire mitochondrial genome. A single nucleotide incorporation cycle includes binding of the incoming nucleotide at the insertion site, a phosphodiester bond formation reaction that extends the 3'-end of the primer DNA, and translocation of the primer terminus to the post-insertion site. After completing replication of a mtDNA strand, mediates 3' -&gt; 5' exonucleolytic degradation at the nick to enable proper ligation. Highly accurate due to high nucleotide selectivity and 3' -&gt; 5' exonucleolytic proofreading. Proficiently corrects base substitutions, single-base additions and deletions in non-repetitive sequences and short repeats, but displays lower proofreading activity when replicating longer homopolymeric stretches. Exerts exonuclease activity toward single-stranded DNA and double-stranded DNA containing 3'-terminal mispairs. When a misincorporation occurs, transitions from replication to a pro-nucleolytic editing mode and removes the missincorporated nucleoside in the exonuclease active site. Proceeds via an SN2 nucleolytic mechanism in which Asp-198 catalyzes phosphodiester bond hydrolysis and Glu-200 stabilizes the leaving group. As a result the primer strand becomes one nucleotide shorter and is positioned in the post-insertion site, ready to resume DNA synthesis. Exerts 5'-deoxyribose phosphate (dRP) lyase activity and mediates repair-associated mtDNA synthesis (gap filling) in base-excision repair pathway. Catalyzes the release of the 5'-terminal 2-deoxyribose-5-phosphate sugar moiety from incised apurinic/apyrimidinic (AP) sites to produce a substrate for DNA ligase. The dRP lyase reaction does not require divalent metal ions and likely proceeds via a Schiff base intermediate in a beta-elimination reaction mechanism. In Rattus norvegicus (Rat), this protein is DNA polymerase subunit gamma-1.